A 480-amino-acid chain; its full sequence is MKLDAPFNLDPNVKVRTRFAPSPTGYLHVGGARTALYSWLYAKHNNGEFVLRIEDTDLERSTPEATAAIIEGMEWLNLPWEHGPYYQTKRFDRYNQVIDEMIEQGLAYRCYCTKEHLEELRHTQEQNKEKPRYDRHCLHDHNHSPDEPHVVRFKNPTEGSVVFDDAVRGRIEISNSELDDLIIRRTDGSPTYNFCVVVDDWDMGITHVVRGEDHINNTPRQINILKAIGAPIPTYAHVSMINGDDGQKLSKRHGAVSVMQYRDDGYLPEALINYLVRLGWGHGDQEIFSREEMINYFELDHVSKSASAFNTEKLQWLNQHYIRELPPEYVAKHLEWHYKDQGIDTSNGPALTEIVTMLAERCKTLKEMARSSRYFFEEFETFDEAAAKKHFKGNAAEALAKVKEKLTALSSWDLHSIHEAIEQTAAELEVGMGKVGMPLRVAVTGSGQSPSMDVTLVGIGRDRVLARIQRAIDFIHAQNA.

The 'HIGH' region signature appears at 21 to 31; the sequence is PSPTGYLHVGG. Zn(2+) is bound by residues C110, C112, C137, and H139. Positions 248 to 252 match the 'KMSKS' region motif; sequence KLSKR. Residue K251 coordinates ATP.

Belongs to the class-I aminoacyl-tRNA synthetase family. Glutamate--tRNA ligase type 1 subfamily. As to quaternary structure, monomer. Zn(2+) serves as cofactor.

It localises to the cytoplasm. The enzyme catalyses tRNA(Glu) + L-glutamate + ATP = L-glutamyl-tRNA(Glu) + AMP + diphosphate. Its function is as follows. Catalyzes the attachment of glutamate to tRNA(Glu) in a two-step reaction: glutamate is first activated by ATP to form Glu-AMP and then transferred to the acceptor end of tRNA(Glu). This Haemophilus influenzae (strain ATCC 51907 / DSM 11121 / KW20 / Rd) protein is Glutamate--tRNA ligase.